Here is a 145-residue protein sequence, read N- to C-terminus: 3-dehydroquinate dehydratase (145 aa).

The Proton acceptor role is filled by Y23. Substrate contacts are provided by N75, H81, and D88. The active-site Proton donor is the H101. Substrate contacts are provided by residues L102–S103 and R112.

Belongs to the type-II 3-dehydroquinase family. Homododecamer.

It catalyses the reaction 3-dehydroquinate = 3-dehydroshikimate + H2O. The protein operates within metabolic intermediate biosynthesis; chorismate biosynthesis; chorismate from D-erythrose 4-phosphate and phosphoenolpyruvate: step 3/7. Catalyzes a trans-dehydration via an enolate intermediate. The chain is 3-dehydroquinate dehydratase from Legionella pneumophila (strain Paris).